A 407-amino-acid chain; its full sequence is TOM1-like protein 1 (407 aa).

G2 carries the N-acetylglycine modification. Positions 55 to 183 (ATTENLEEPD…SLKARGIRFP (129 aa)) constitute a VHS domain. In terms of domain architecture, GAT spans 228 to 315 (FTAEQTKEAF…TLSKYEEMNK (88 aa)). Positions 315-407 (KPSAPLTSHE…SSKNDDLIRF (93 aa)) are disordered. Phosphoserine is present on S337. Basic and acidic residues predominate over residues 337–347 (SPIHGREESLV). Residues 353 to 364 (VRGGFHGGGGSG) show a composition bias toward gly residues. Residues 388–407 (PDHDPKKEQSSSKNDDLIRF) show a composition bias toward basic and acidic residues.

It belongs to the TOM1 family. In terms of tissue distribution, ubiquitously expressed.

The protein resides in the membrane. Its function is as follows. Might contribute to the loading of the ESCRT machinery. In Arabidopsis thaliana (Mouse-ear cress), this protein is TOM1-like protein 1.